A 403-amino-acid polypeptide reads, in one-letter code: Acetylornithine/succinyldiaminopimelate aminotransferase (403 aa).

Pyridoxal 5'-phosphate is bound by residues 107-108 and Phe-140; that span reads GA. Position 143 (Arg-143) interacts with N(2)-acetyl-L-ornithine. 225–228 lines the pyridoxal 5'-phosphate pocket; sequence DEVQ. Residue Lys-254 is modified to N6-(pyridoxal phosphate)lysine. Thr-282 provides a ligand contact to N(2)-acetyl-L-ornithine. Pyridoxal 5'-phosphate is bound at residue Thr-283.

The protein belongs to the class-III pyridoxal-phosphate-dependent aminotransferase family. ArgD subfamily. In terms of assembly, homodimer. Pyridoxal 5'-phosphate serves as cofactor.

The protein resides in the cytoplasm. It catalyses the reaction N(2)-acetyl-L-ornithine + 2-oxoglutarate = N-acetyl-L-glutamate 5-semialdehyde + L-glutamate. The catalysed reaction is N-succinyl-(2S,6S)-2,6-diaminopimelate + 2-oxoglutarate = (S)-2-succinylamino-6-oxoheptanedioate + L-glutamate. The protein operates within amino-acid biosynthesis; L-arginine biosynthesis; N(2)-acetyl-L-ornithine from L-glutamate: step 4/4. It participates in amino-acid biosynthesis; L-lysine biosynthesis via DAP pathway; LL-2,6-diaminopimelate from (S)-tetrahydrodipicolinate (succinylase route): step 2/3. Its function is as follows. Involved in both the arginine and lysine biosynthetic pathways. The chain is Acetylornithine/succinyldiaminopimelate aminotransferase from Photorhabdus laumondii subsp. laumondii (strain DSM 15139 / CIP 105565 / TT01) (Photorhabdus luminescens subsp. laumondii).